Reading from the N-terminus, the 294-residue chain is Cytidine deaminase (294 aa).

2 consecutive CMP/dCMP-type deaminase domains span residues 48–168 (DEDA…FGPK) and 186–294 (LTGD…VLLG). 89–91 (NME) serves as a coordination point for substrate. His102 serves as a coordination point for Zn(2+). Catalysis depends on Glu104, which acts as the Proton donor. Cys129 and Cys132 together coordinate Zn(2+).

This sequence belongs to the cytidine and deoxycytidylate deaminase family. In terms of assembly, homodimer. It depends on Zn(2+) as a cofactor.

The enzyme catalyses cytidine + H2O + H(+) = uridine + NH4(+). The catalysed reaction is 2'-deoxycytidine + H2O + H(+) = 2'-deoxyuridine + NH4(+). This enzyme scavenges exogenous and endogenous cytidine and 2'-deoxycytidine for UMP synthesis. This is Cytidine deaminase from Salmonella agona (strain SL483).